The following is a 426-amino-acid chain: Probable M18 family aminopeptidase 2 (426 aa).

3 residues coordinate Zn(2+): His-79, His-156, and His-399.

This sequence belongs to the peptidase M18 family. Zn(2+) is required as a cofactor.

This Mycobacterium leprae (strain TN) protein is Probable M18 family aminopeptidase 2 (apeB).